The following is a 468-amino-acid chain: MKTTHRTRMPTTLEAFSPIIVMLLLLGLGYALFDLPAEPLMIISTVFAGFLVFKLGHCYLDILDAISEKIAKTMPALLILITVGLLIGTWISGGTIPMMIYYGLKAISPEYLYVTALFLTAIVSICTGTSWGSAGTVGVAFMGVAIGLDANLAATAGAVVAGAYFGDKLSPLSDTTNIASAAAGVDLYEHIAHLLYTTLPSFILSATVYVVYGLNYDFSNVATPEKVNTMIHELEQVYHFNFLLLIPVAIVLWGSITKKPTIPVMLLSAFIAIINAILIQKFSLSDVINSAVNGFDTSMIHHTSVSSDLSRLLNRGGMNSMMGTLLICFCALSFAGVLQLSGALTVIIQKLLTFVHSTLSLIITTILCGLTMIGVTCNGQISILIPGEMLKNAYVEKGLHPKNLSRTAEDSATIIEPILPWTAAGAYMAGTLGVATLSYLPWAILCWSGIIFAIIYGASGIGIAKLKK.

Transmembrane regions (helical) follow at residues 13-33 (LEAFSPIIVMLLLLGLGYALF), 40-60 (LMIISTVFAGFLVFKLGHCYL), 76-96 (ALLILITVGLLIGTWISGGTI), 112-132 (LYVTALFLTAIVSICTGTSWG), 141-161 (FMGVAIGLDANLAATAGAVVA), 194-214 (LLYTTLPSFILSATVYVVYGL), 237-257 (VYHFNFLLLIPVAIVLWGSIT), 260-280 (PTIPVMLLSAFIAIINAILIQ), 328-348 (CFCALSFAGVLQLSGALTVII), 354-374 (FVHSTLSLIITTILCGLTMIG), 414-434 (IIEPILPWTAAGAYMAGTLGV), and 443-463 (AILCWSGIIFAIIYGASGIGI).

Belongs to the NhaC Na(+)/H(+) (TC 2.A.35) antiporter family.

The protein localises to the cell membrane. This is an uncharacterized protein from Haemophilus influenzae (strain ATCC 51907 / DSM 11121 / KW20 / Rd).